Here is a 200-residue protein sequence, read N- to C-terminus: Methylthioribulose-1-phosphate dehydratase-like protein (200 aa).

This sequence belongs to the aldolase class II family. MtnB subfamily.

The protein is Methylthioribulose-1-phosphate dehydratase-like protein of Schizosaccharomyces pombe (strain 972 / ATCC 24843) (Fission yeast).